Reading from the N-terminus, the 154-residue chain is Neurotrophin-3 (154 aa).

An N-terminal signal peptide occupies residues 1–18 (MSILFYVMFLAYLRGVQG). A propeptide spanning residues 19–134 (NSMDQRSLPE…VNSRSPRRKR (116 aa)) is cleaved from the precursor.

This sequence belongs to the NGF-beta family.

The protein localises to the secreted. Its function is as follows. Seems to promote the survival of visceral and proprioceptive sensory neurons. The protein is Neurotrophin-3 (NTF3) of Cervus elaphus (Red deer).